The chain runs to 2173 residues: Mediator of DNA damage checkpoint protein 1 (2173 aa).

The span at 1–19 shows a compositional bias: acidic residues; sequence MEDTQAIDWDVEEEEETEQ. Positions 1-22 are disordered; sequence MEDTQAIDWDVEEEEETEQSSE. An interaction with CHEK2 region spans residues 1–150; the sequence is MEDTQAIDWD…SRGPLTVEET (150 aa). The interaction with the MRN complex stretch occupies residues 2 to 222; that stretch reads EDTQAIDWDV…PFAFNLNSDT (221 aa). Residue T4 is modified to Phosphothreonine. The FHA domain maps to 54–105; that stretch reads NVVGRMPDCSVALPFPSISKQHAEIEILAWDKAPILRDCGSLNGTQILRPPK. S108 is subject to Phosphoserine. The interval 145–570 is required for nuclear localization (NLS1); it reads LTVEETPRVQ…PAKLLVVSLE (426 aa). Phosphothreonine is present on T146. Phosphoserine occurs at positions 168, 176, 198, and 220. Residues 198–320 are disordered; the sequence is SDEEGHSPVL…PPGRPAEVHL (123 aa). T222 carries the post-translational modification Phosphothreonine. Low complexity predominate over residues 227–244; sequence GQQSATEEASSAARRGAT. Residues 259–276 are compositionally biased toward basic and acidic residues; sequence QLEKDQPSVKERDNDTKV. Residue S301 is modified to Phosphoserine. T303 carries the phosphothreonine modification. Residues 308 to 320 show a composition bias toward basic and acidic residues; it reads DSRPPGRPAEVHL. A Phosphoserine modification is found at S331. The residue at position 333 (T333) is a Phosphothreonine. Residues 359-383 form a disordered region; sequence GTRGPGAPGLSHLQESQAGSDTDVE. 2 positions are modified to phosphoserine: S374 and S378. T380 bears the Phosphothreonine mark. S396, S399, and S404 each carry phosphoserine. The residue at position 406 (T406) is a Phosphothreonine. S413 bears the Phosphoserine mark. A disordered region spans residues 444-515; sequence LQRSQTTTGR…SSPGIHLERS (72 aa). Phosphothreonine is present on T451. S455 carries the phosphoserine modification. Position 457 is a phosphothreonine (T457). Phosphoserine is present on residues S487, S497, S500, S506, S507, and S515. T525 bears the Phosphothreonine mark. S592 bears the Phosphoserine mark. Residue K618 forms a Glycyl lysine isopeptide (Lys-Gly) (interchain with G-Cter in SUMO1); alternate linkage. K618 is covalently cross-linked (Glycyl lysine isopeptide (Lys-Gly) (interchain with G-Cter in SUMO2); alternate). At S631 the chain carries Phosphoserine. 2 disordered regions span residues 652–697 and 773–1770; these read VDTD…EDPD and HLEA…TLRS. A compositionally biased stretch (basic and acidic residues) spans 673-687; the sequence is GREREQHVGRTKDSE. Residues 688–697 are compositionally biased toward acidic residues; that stretch reads DNCDDSEDPD. Phosphoserine is present on residues S782 and S795. Position 814 is an N6-acetyllysine (K814). Basic and acidic residues-rich tracts occupy residues 821-846, 853-864, 870-903, and 916-953; these read ETAERVGPERGPLERETEKLLPERQT, ELTRGIQDREQK, DTQRQESDKNGESASPERDRESLKVEIETSKEIQ, and AFEREVERPVADRECEPAELEEKVPKVILERDAQRGEP. Phosphoserine occurs at positions 957, 1000, 1035, 1070, and 1088. Residues 957–969 show a composition bias toward polar residues; it reads SQDQKGQASSPTS. Over residues 1079 to 1090 the composition is skewed to basic and acidic residues; it reads TIRKTGQDRSQE. The span at 1105–1115 shows a compositional bias: basic residues; sequence PKPKIITRKSS. Positions 1131 to 1156 are enriched in polar residues; the sequence is PSTSTAQPVTPKPTSQATRSRTNRSS. The tract at residues 1150–1694 is interaction with the PRKDC complex; that stretch reads SRTNRSSVKT…KNRSSVKTPE (545 aa). Over residues 1157 to 1169 the composition is skewed to low complexity; it reads VKTPEPVVPTVPE. T1159 carries the phosphothreonine modification. A compositionally biased stretch (polar residues) spans 1171 to 1189; it reads QPSTSTDQPVASEPTSQAT. T1200 is subject to Phosphothreonine. S1237 is subject to Phosphoserine. Residues T1241, T1282, and T1304 each carry the phosphothreonine modification. A compositionally biased stretch (low complexity) spans 1280 to 1292; sequence VKTPEPVVPTVPE. Polar residues predominate over residues 1294-1320; sequence QPSTSTDQPVTSEPTSQATRGRTNRSS. Residues 1321–1333 show a composition bias toward low complexity; that stretch reads VKTPEPVVPTVPE. Over residues 1335–1353 the composition is skewed to polar residues; that stretch reads QPSTSTDQPVASEPTSQAT. A compositionally biased stretch (low complexity) spans 1390–1402; the sequence is TSRTTRSRTNMSS. 4 stretches are compositionally biased toward polar residues: residues 1418 to 1434, 1456 to 1487, 1499 to 1527, and 1540 to 1559; these read PSTSTEQPVITEPTYQP, KLQSSTSTDQPITPEPTSQATRGRTNRSSVKS, QPSTSTHQPVTAKHTSQATRGRTNRSSVK, and QPSTSTHQPITPEPTSQATR. Phosphoserine occurs at positions 1483 and 1484. At K1486 the chain carries N6-acetyllysine. Phosphothreonine occurs at positions 1509 and 1550. Positions 1567–1578 are enriched in low complexity; the sequence is VKTPKIVVPTVP. Over residues 1581–1598 the composition is skewed to polar residues; it reads QASTSTDQPVTSEPTSRT. Phosphothreonine occurs at positions 1617 and 1632. Positions 1626–1639 are enriched in polar residues; that stretch reads STDQPITPKPTSRA. Position 1648 is a phosphoserine (S1648). Phosphothreonine occurs at positions 1651 and 1673. Residues 1664 to 1680 are compositionally biased toward polar residues; the sequence is PSTSRSQLVTPEPTSRA. S1688 is modified (phosphoserine). 4 positions are modified to phosphothreonine: T1692, T1714, T1748, and T1755. The span at 1705–1721 shows a compositional bias: polar residues; sequence PTTSTDQPVTPKPTSRA. Polar residues predominate over residues 1761-1770; it reads QGSQSKTLRS. Phosphoserine is present on S1765. T1781 is subject to Phosphothreonine. A required for nuclear localization (NLS2) region spans residues 1782-2173; sequence PEFQSPVTTD…VLSPLEMSST (392 aa). Phosphoserine is present on residues S1786 and S1795. The interval 1809-1971 is disordered; sequence RATGNPGSLT…NRSLRRTKLN (163 aa). A Glycyl lysine isopeptide (Lys-Gly) (interchain with G-Cter in SUMO2) cross-link involves residue K1824. S1859 is subject to Phosphoserine. A Glycyl lysine isopeptide (Lys-Gly) (interchain with G-Cter in SUMO2) cross-link involves residue K1874. Position 1884 is a phosphothreonine (T1884). Phosphoserine is present on S1904. Residues 1907-1920 show a composition bias toward polar residues; that stretch reads HQKQPQRGEVSQKT. Residue K1924 forms a Glycyl lysine isopeptide (Lys-Gly) (interchain with G-Cter in SUMO1); alternate linkage. A Glycyl lysine isopeptide (Lys-Gly) (interchain with G-Cter in SUMO2); alternate cross-link involves residue K1924. Over residues 1931–1941 the composition is skewed to basic and acidic residues; sequence AEKPGKEEDVM. The residue at position 1942 (T1942) is a Phosphothreonine. BRCT domains are found at residues 1976 to 2054 and 2075 to 2166; these read APKV…EYVV and RERR…FVLS. An Omega-N-methylarginine modification is found at R2027.

As to quaternary structure, homodimer. Interacts with H2AX, which requires phosphorylation of H2AX on 'Ser-139'. Interacts with the MRN complex, composed of MRE11, RAD50, and NBN. Interacts with CHEK2, which requires ATM-mediated phosphorylation of 'Thr-68' within the FHA domain of CHEK2. Interacts constitutively with the BRCA1-BARD1 complex, SMC1A and TP53BP1. Interacts with ATM and FANCD2, and these interactions are reduced upon DNA damage. Also interacts with the PRKDC complex, composed of XRCC6/KU70, XRCC5/KU80 and PRKDC/XRCC7. This interaction may be required for PRKDC autophosphorylation, which is essential for DNA double strand break (DSB) repair. When phosphorylated by ATM, interacts with RNF8 (via FHA domain). Interacts with CEP164. When phosphorylated, interacts with APTX (via FHA-like domain). Interacts (when phosphorylated) with TOPBP1; promoting TOPBP1 localization to DNA damage sites during mitosis. Interacts (when phosphorylated) with NBN; promoting NBN and MRN complex localization to DNA damage sites. Phosphorylated upon exposure to ionizing radiation (IR), ultraviolet radiation (UV), and hydroxyurea (HU). Phosphorylation in response to IR requires ATM, NBN, and possibly CHEK2. Also phosphorylated during the G2/M phase of the cell cycle and during activation of the mitotic spindle checkpoint. Phosphorylation at Thr-4 by ATM stabilizes and enhances homodimerization via the FHA domain. Phosphorylated at Ser-168 and Ser-198 by CK2 in response to DNA damage during mitosis, promoting interaction with TOPBP1. Phosphorylated by CK2 in response to DNA damage, promoting interaction with NBN and recruitment of the MRN complex to DNA damage sites. In terms of processing, sumoylation at Lys-1924 by PIAS4 following DNA damage promotes ubiquitin-mediated degradation. Post-translationally, ubiquitinated by RNF4, leading to proteasomal degradation; undergoes 'Lys-48'-linked polyubiquitination.

The protein localises to the nucleus. Its subcellular location is the chromosome. In terms of biological role, histone reader protein required for checkpoint-mediated cell cycle arrest in response to DNA damage within both the S phase and G2/M phases of the cell cycle. Specifically recognizes and binds histone H2AX phosphorylated at 'Ser-139', a marker of DNA damage, serving as a scaffold for the recruitment of DNA repair and signal transduction proteins to discrete foci of DNA damage sites. Also required for downstream events subsequent to the recruitment of these proteins. These include phosphorylation and activation of the ATM, CHEK1 and CHEK2 kinases, and stabilization of TP53/p53 and apoptosis. ATM and CHEK2 may also be activated independently by a parallel pathway mediated by TP53BP1. Required for chromosomal stability during mitosis by promoting recruitment of TOPBP1 to DNA double strand breaks (DSBs): TOPBP1 forms filamentous assemblies that bridge MDC1 and tether broken chromosomes during mitosis. Required for the repair of DSBs via homologous recombination by promoting recruitment of NBN component of the MRN complex to DSBs. The sequence is that of Mediator of DNA damage checkpoint protein 1 (MDC1) from Macaca mulatta (Rhesus macaque).